The sequence spans 94 residues: uncharacterized protein (94 aa).

The region spanning 13-67 is the HTH cro/C1-type domain; it reads IQESLDELNVSLREFARAMEIAPSTASRLLTGKAALTPEMAIKLSVVIGSSPQMW. Residues 24 to 43 constitute a DNA-binding region (H-T-H motif); it reads LREFARAMEIAPSTASRLLT.

It belongs to the VapA/VapI family.

This is an uncharacterized protein from Escherichia coli (strain K12).